Reading from the N-terminus, the 126-residue chain is uncharacterized protein (126 aa).

The HTH hxlR-type domain maps to 8–106; it reads ISVEATLEVI…WGANHINRVY (99 aa).

This is an uncharacterized protein from Bacillus subtilis (strain 168).